A 155-amino-acid chain; its full sequence is Small ribosomal subunit protein uS7 (155 aa).

It belongs to the universal ribosomal protein uS7 family. Part of the 30S ribosomal subunit. Contacts proteins S9 and S11.

Functionally, one of the primary rRNA binding proteins, it binds directly to 16S rRNA where it nucleates assembly of the head domain of the 30S subunit. Is located at the subunit interface close to the decoding center, probably blocks exit of the E-site tRNA. This is Small ribosomal subunit protein uS7 from Chlorobium chlorochromatii (strain CaD3).